A 421-amino-acid polypeptide reads, in one-letter code: Acyl-coenzyme A thioesterase 5 (421 aa).

Catalysis depends on charge relay system residues Ser232, Asp326, and His360. A Microbody targeting signal motif is present at residues 419 to 421; the sequence is AKL.

This sequence belongs to the C/M/P thioester hydrolase family. In terms of tissue distribution, highly expressed in spleen, brain, testis and proximal and distal intestine; expressed at low level in the liver.

The protein localises to the peroxisome. It catalyses the reaction hexadecanoyl-CoA + H2O = hexadecanoate + CoA + H(+). The enzyme catalyses decanoyl-CoA + H2O = decanoate + CoA + H(+). It carries out the reaction octanoyl-CoA + H2O = octanoate + CoA + H(+). The catalysed reaction is dodecanoyl-CoA + H2O = dodecanoate + CoA + H(+). It catalyses the reaction tetradecanoyl-CoA + H2O = tetradecanoate + CoA + H(+). The enzyme catalyses octadecanoyl-CoA + H2O = octadecanoate + CoA + H(+). It carries out the reaction eicosanoyl-CoA + H2O = eicosanoate + CoA + H(+). The catalysed reaction is (9Z)-octadecenoyl-CoA + H2O = (9Z)-octadecenoate + CoA + H(+). It catalyses the reaction (9Z,12Z)-octadecadienoyl-CoA + H2O = (9Z,12Z)-octadecadienoate + CoA + H(+). The enzyme catalyses (5Z,8Z,11Z,14Z)-eicosatetraenoyl-CoA + H2O = (5Z,8Z,11Z,14Z)-eicosatetraenoate + CoA + H(+). It carries out the reaction (9Z)-hexadecenoyl-CoA + H2O = (9Z)-hexadecenoate + CoA + H(+). The protein operates within lipid metabolism; fatty acid metabolism. Its function is as follows. Catalyzes the hydrolysis of acyl-CoAs into free fatty acids and coenzyme A (CoASH), regulating their respective intracellular levels. Mainly active on medium-chain acyl-CoAs. Seems to be involved in intraperoxisomal regulation of acyl-CoA levels, but not CoASH levels. May have a function in termination of beta-oxidation of fatty acids. This chain is Acyl-coenzyme A thioesterase 5 (Acot5), found in Mus musculus (Mouse).